Here is a 509-residue protein sequence, read N- to C-terminus: Subtelomeric hrmA-associated cluster protein AFUA_5G14880 (509 aa).

Functionally, part of the subtelomeric hrmA-associated cluster (HAC) containing genes that alter the hyphal surface (such as reduced total chitin or increased beta-glucan exposure) and perturb inter-hyphal interactions within the developing biofilms, resulting in a loss of vertically aligned polarized growing filaments. Consequently, this hypoxia-typic morphotype (called H-MORPH) with altered biofilm architecture leads to increased hypoxia fitness, increased host inflammation, rapid disease progression, and mortality in a murine model of invasive aspergillosis. The protein is Subtelomeric hrmA-associated cluster protein AFUA_5G14880 of Aspergillus fumigatus (strain ATCC MYA-4609 / CBS 101355 / FGSC A1100 / Af293) (Neosartorya fumigata).